The following is an 89-amino-acid chain: Sugar transporter SemiSWEET (89 aa).

3 consecutive transmembrane segments (helical) span residues 4 to 27 (ILLT…IKTI), 35 to 55 (ISVV…AYGI), and 60 to 82 (FAVL…ITLI). One can recognise a PQ-loop domain in the interval 7 to 59 (TGLFAAFFTTFAFAPQSIKTIRTRNTEGISVVMYIMFLTGVISWIAYGIMRSD).

Homodimer.

The protein localises to the cell membrane. In terms of biological role, the homodimer mediates transmembrane sugar transport down a concentration gradient. Transport is probably effected by rocking-type movements, where a cargo-binding cavity opens first on one and then on the other side of the membrane. The sequence is that of Sugar transporter SemiSWEET from Escherichia coli (strain UMEA 3162-1).